The primary structure comprises 264 residues: Hydroxyethylthiazole kinase (264 aa).

Met-40 serves as a coordination point for substrate. The ATP site is built by Lys-116 and Thr-161. Gly-188 is a substrate binding site.

This sequence belongs to the Thz kinase family. The cofactor is Mg(2+).

It catalyses the reaction 5-(2-hydroxyethyl)-4-methylthiazole + ATP = 4-methyl-5-(2-phosphooxyethyl)-thiazole + ADP + H(+). Its pathway is cofactor biosynthesis; thiamine diphosphate biosynthesis; 4-methyl-5-(2-phosphoethyl)-thiazole from 5-(2-hydroxyethyl)-4-methylthiazole: step 1/1. Its function is as follows. Catalyzes the phosphorylation of the hydroxyl group of 4-methyl-5-beta-hydroxyethylthiazole (THZ). In Staphylococcus carnosus (strain TM300), this protein is Hydroxyethylthiazole kinase.